The primary structure comprises 130 residues: MAQAQYAGTGRRKNAVARVRLVPGTGKITVNKKDVEEYIPHADLRLVINQPFAVTSTEGSYDVFVNVVGGGYAGQSGAIRHGIARALLQVDPDFRDSLKRAGLLTRDARMVERKKPGLKKARKASQFSKR.

It belongs to the universal ribosomal protein uS9 family.

The sequence is that of Small ribosomal subunit protein uS9 from Streptococcus equi subsp. equi (strain 4047).